Consider the following 1212-residue polypeptide: DNA topoisomerase 1 (1212 aa).

Residues 1–114 (MKLVVVESPA…DVERVTFNAI (114 aa)) enclose the Toprim domain. Residues Glu7 and Asp80 each coordinate Mg(2+). Residues 130 to 556 (DNDLINAYLA…AFWHDFKPKT (427 aa)) form the Topo IA-type catalytic domain. The interval 164 to 169 (SAGRVQ) is interaction with DNA. Tyr293 functions as the O-(5'-phospho-DNA)-tyrosine intermediate in the catalytic mechanism. Residues 592–619 (CPSCHTGRLALKGGRFGAFIACSNYPEC) form a C4-type zinc finger. Disordered stretches follow at residues 687–742 (GKGN…GVST), 758–937 (ALAG…KARA), and 1107–1212 (RAKM…EVAE). Composition is skewed to polar residues over residues 708 to 742 (ASST…GVST) and 770 to 782 (VSDN…SSTI). Basic and acidic residues predominate over residues 815–840 (ADNRLLSHRNGDIDSRAIPADHKDSS). Polar residues-rich tracts occupy residues 881-890 (AITSDNSPSD) and 897-906 (STPSSATSSV). Residues 921-934 (KADEQAKEEEESRK) are compositionally biased toward basic and acidic residues. The span at 1109 to 1140 (KMPKKKKTKKAAAKKPAAKKTTTKKAAPKKAT) shows a compositional bias: basic residues. Low complexity predominate over residues 1141-1151 (TKTATPKSATT). Basic residues predominate over residues 1167-1182 (PAKKAVAKKTTAKKPA). Residues 1183–1199 (SKSATKKAPSSKTTAAK) show a composition bias toward low complexity.

It belongs to the type IA topoisomerase family. As to quaternary structure, monomer. Requires Mg(2+) as cofactor.

The enzyme catalyses ATP-independent breakage of single-stranded DNA, followed by passage and rejoining.. Functionally, releases the supercoiling and torsional tension of DNA, which is introduced during the DNA replication and transcription, by transiently cleaving and rejoining one strand of the DNA duplex. Introduces a single-strand break via transesterification at a target site in duplex DNA. The scissile phosphodiester is attacked by the catalytic tyrosine of the enzyme, resulting in the formation of a DNA-(5'-phosphotyrosyl)-enzyme intermediate and the expulsion of a 3'-OH DNA strand. The free DNA strand then undergoes passage around the unbroken strand, thus removing DNA supercoils. Finally, in the religation step, the DNA 3'-OH attacks the covalent intermediate to expel the active-site tyrosine and restore the DNA phosphodiester backbone. This chain is DNA topoisomerase 1, found in Zymomonas mobilis subsp. mobilis (strain ATCC 31821 / ZM4 / CP4).